The primary structure comprises 75 residues: Dermaseptin-A3 (75 aa).

The first 22 residues, 1-22 (MAFLKKSLFLVLLLGLISLSIC), serve as a signal peptide directing secretion. Positions 23–43 (EEEKRENEVEEEQEDDEQSEL) are excised as a propeptide. At glutamine 72 the chain carries Glutamine amide. Positions 74–75 (EQ) are excised as a propeptide.

This sequence belongs to the frog skin active peptide (FSAP) family. Dermaseptin subfamily. As to expression, expressed by the skin glands.

It localises to the secreted. In terms of biological role, possesses a potent antimicrobial activity against Gram-positive and Gram-negative bacteria. Probably acts by disturbing membrane functions with its amphipathic structure. In Agalychnis annae (Blue-sided leaf frog), this protein is Dermaseptin-A3.